Here is a 159-residue protein sequence, read N- to C-terminus: 2-C-methyl-D-erythritol 2,4-cyclodiphosphate synthase (159 aa).

2 residues coordinate a divalent metal cation: Asp8 and His10. 4-CDP-2-C-methyl-D-erythritol 2-phosphate contacts are provided by residues 8–10 (DVH) and 34–35 (HS). His42 is a binding site for a divalent metal cation. 4-CDP-2-C-methyl-D-erythritol 2-phosphate is bound by residues 56–58 (DIG), 61–65 (FPDTD), 100–106 (AQAPKML), 132–135 (TTTE), Phe139, and Arg142.

This sequence belongs to the IspF family. As to quaternary structure, homotrimer. A divalent metal cation is required as a cofactor.

It carries out the reaction 4-CDP-2-C-methyl-D-erythritol 2-phosphate = 2-C-methyl-D-erythritol 2,4-cyclic diphosphate + CMP. The protein operates within isoprenoid biosynthesis; isopentenyl diphosphate biosynthesis via DXP pathway; isopentenyl diphosphate from 1-deoxy-D-xylulose 5-phosphate: step 4/6. In terms of biological role, involved in the biosynthesis of isopentenyl diphosphate (IPP) and dimethylallyl diphosphate (DMAPP), two major building blocks of isoprenoid compounds. Catalyzes the conversion of 4-diphosphocytidyl-2-C-methyl-D-erythritol 2-phosphate (CDP-ME2P) to 2-C-methyl-D-erythritol 2,4-cyclodiphosphate (ME-CPP) with a corresponding release of cytidine 5-monophosphate (CMP). This Citrobacter koseri (strain ATCC BAA-895 / CDC 4225-83 / SGSC4696) protein is 2-C-methyl-D-erythritol 2,4-cyclodiphosphate synthase.